The primary structure comprises 240 residues: Probable transcriptional regulatory protein YrbC (240 aa).

Belongs to the TACO1 family.

It is found in the cytoplasm. The protein is Probable transcriptional regulatory protein YrbC (yrbC) of Bacillus subtilis (strain 168).